A 311-amino-acid chain; its full sequence is Phosphoglycerate mutase 2 (311 aa).

Substrate-binding positions include 16–23, 29–30, arginine 73, 126–129, lysine 137, 153–154, and 243–244; these read RHGQSELN, CG, ERHY, RR, and GS. The Tele-phosphohistidine intermediate role is filled by histidine 17. Residue glutamate 126 is the Proton donor/acceptor of the active site.

Belongs to the phosphoglycerate mutase family. BPG-dependent PGAM subfamily.

The protein resides in the cytoplasm. It catalyses the reaction (2R)-2-phosphoglycerate = (2R)-3-phosphoglycerate. It participates in carbohydrate degradation; glycolysis; pyruvate from D-glyceraldehyde 3-phosphate: step 3/5. Could be non-functional. The chain is Phosphoglycerate mutase 2 (GPM2) from Saccharomyces cerevisiae (strain ATCC 204508 / S288c) (Baker's yeast).